The following is a 1420-amino-acid chain: tRNA (32-2'-O)-methyltransferase regulator TRM732 (1420 aa).

The required for activity stretch occupies residues 748 to 754 (RRSGGLP).

Belongs to the THADA family. In terms of assembly, interacts with TRM7; for 2'-O-methylation of position 32 in substrate tRNAs.

The protein resides in the cytoplasm. Together with methyltransferase TRM7, methylates the 2'-O-ribose of nucleotides at position 32 of the anticodon loop of substrate tRNAs. This Saccharomyces cerevisiae (strain ATCC 204508 / S288c) (Baker's yeast) protein is tRNA (32-2'-O)-methyltransferase regulator TRM732 (TRM732).